The sequence spans 820 residues: MLCLTSSSSSAPAPLLPSLADRPSPGIAGGGGNVRLSVVSSPRRSWPGKVKTNFSVPATARKNKTMVTVVEEVDHLPIYDLDPKLEEFKDHFNYRIKRYLDQKCLIEKHEGGLEEFSKGYLKFGINTVDGATIYREWAPAAQEAQLIGEFNNWNGAKHKMEKDKFGIWSIKISHVNGKPAIPHNSKVKFRFRHGGGAWVDRIPAWIRYATFDASKFGAPYDGVHWDPPACERYVFKHPRPPKPDAPRIYEAHVGMSGEEPEVSTYREFADNVLPRIRANNYNTVQLMAIMEHSYYASFGYHVTNFFAVSSRSGTPEDLKYLVDKAHSLGLRVLMDVVHSHASNNVTDGLNGYDVGQNTHESYFHTGDRGYHKLWDSRLFNYANWEVLRFLLSNLRYWMDEFMFDGFRFDGVTSMLYHHHGINKGFTGNYKEYFSLDTDVDAIVYMMLANHLMHKLLPEATIVAEDVSGMPVLCRPVDEGGVGFDFRLAMAIPDRWIDYLKNKEDRKWSMSEIVQTLTNRRYTEKCIAYAESHDQSIVGDKTIAFLLMDKEMYTGMSDLQPASPTINRGIALQKMIHFITMALGGDGYLNFMGNEFGHPEWIDFPREGNNWSYDKCRRQWSLVDTDHLRYKYMNAFDQAMNALEEEFSFLSSSKQIVSDMNEKDKVIVFERGDLVFVFNFHPNKTYKGYKVGCDLPGKYRVALDSDALVFGGHGRVGHDVDHFTSPEGMPGVPETNFNNRPNSFKVLSPPRTCVAYYRVDEDREELRRGGAVASGKIVTEYIDVEATSGETISGGWKGSEKDDCGKKGMKFVFRSSDEDCK.

The segment covering 1–20 (MLCLTSSSSSAPAPLLPSLA) has biased composition (low complexity). Residues 1–28 (MLCLTSSSSSAPAPLLPSLADRPSPGIA) are disordered. The transit peptide at 1 to 64 (MLCLTSSSSS…SVPATARKNK (64 aa)) directs the protein to the chloroplast. The (1,4-alpha-D-glucosyl)n site is built by Trp153 and Lys188. Asp409 (nucleophile) is an active-site residue. Glu464 functions as the Proton donor in the catalytic mechanism.

The protein belongs to the glycosyl hydrolase 13 family. GlgB subfamily. In terms of assembly, monomer.

The protein localises to the plastid. It localises to the chloroplast. Its subcellular location is the amyloplast. The catalysed reaction is Transfers a segment of a (1-&gt;4)-alpha-D-glucan chain to a primary hydroxy group in a similar glucan chain.. It functions in the pathway glycan biosynthesis; starch biosynthesis. Functionally, catalyzes the formation of the alpha-1,6-glucosidic linkages in starch by scission of a 1,4-alpha-linked oligosaccharide from growing alpha-1,4-glucan chains and the subsequent attachment of the oligosaccharide to the alpha-1,6 position. The protein is 1,4-alpha-glucan-branching enzyme, chloroplastic/amyloplastic (SBE1) of Oryza sativa subsp. japonica (Rice).